A 67-amino-acid chain; its full sequence is Large ribosomal subunit protein bL31 (67 aa).

Residues C16, C18, C36, and C39 each contribute to the Zn(2+) site.

This sequence belongs to the bacterial ribosomal protein bL31 family. Type A subfamily. As to quaternary structure, part of the 50S ribosomal subunit. It depends on Zn(2+) as a cofactor.

In terms of biological role, binds the 23S rRNA. This Treponema pallidum (strain Nichols) protein is Large ribosomal subunit protein bL31.